Consider the following 150-residue polypeptide: Large ribosomal subunit protein uL13 (150 aa).

The protein belongs to the universal ribosomal protein uL13 family. In terms of assembly, part of the 50S ribosomal subunit.

Its function is as follows. This protein is one of the early assembly proteins of the 50S ribosomal subunit, although it is not seen to bind rRNA by itself. It is important during the early stages of 50S assembly. The protein is Large ribosomal subunit protein uL13 of Chlamydia caviae (strain ATCC VR-813 / DSM 19441 / 03DC25 / GPIC) (Chlamydophila caviae).